The sequence spans 218 residues: Pyridoxine/pyridoxamine 5'-phosphate oxidase (218 aa).

Residues arginine 12 to tyrosine 15 and arginine 70 contribute to the substrate site. FMN-binding positions include arginine 65–arginine 70, tyrosine 80–threonine 81, lysine 87, and glutamine 109. Residues tyrosine 127, arginine 131, and serine 135 each contribute to the substrate site. FMN contacts are provided by residues glutamine 145 to serine 146 and tryptophan 191. Arginine 197–histidine 199 is a substrate binding site. Residue arginine 201 coordinates FMN.

The protein belongs to the pyridoxamine 5'-phosphate oxidase family. As to quaternary structure, homodimer. Requires FMN as cofactor.

The catalysed reaction is pyridoxamine 5'-phosphate + O2 + H2O = pyridoxal 5'-phosphate + H2O2 + NH4(+). It carries out the reaction pyridoxine 5'-phosphate + O2 = pyridoxal 5'-phosphate + H2O2. It functions in the pathway cofactor metabolism; pyridoxal 5'-phosphate salvage; pyridoxal 5'-phosphate from pyridoxamine 5'-phosphate: step 1/1. It participates in cofactor metabolism; pyridoxal 5'-phosphate salvage; pyridoxal 5'-phosphate from pyridoxine 5'-phosphate: step 1/1. In terms of biological role, catalyzes the oxidation of either pyridoxine 5'-phosphate (PNP) or pyridoxamine 5'-phosphate (PMP) into pyridoxal 5'-phosphate (PLP). The sequence is that of Pyridoxine/pyridoxamine 5'-phosphate oxidase from Acinetobacter baylyi (strain ATCC 33305 / BD413 / ADP1).